Reading from the N-terminus, the 106-residue chain is ATP-dependent Clp protease adapter protein ClpS (106 aa).

The protein belongs to the ClpS family. Binds to the N-terminal domain of the chaperone ClpA.

Functionally, involved in the modulation of the specificity of the ClpAP-mediated ATP-dependent protein degradation. The polypeptide is ATP-dependent Clp protease adapter protein ClpS (Vibrio cholerae serotype O1 (strain ATCC 39541 / Classical Ogawa 395 / O395)).